We begin with the raw amino-acid sequence, 124 residues long: Small ribosomal subunit protein uS12 (124 aa).

Residues 1–32 (MPTINQLVRKGRRDKTAKVKTAALKGSPQRRG) form a disordered region. A 3-methylthioaspartic acid modification is found at Asp89. The disordered stretch occupies residues 104–124 (TQGVKGRKQARSRYGAKKEKS). Over residues 108-118 (KGRKQARSRYG) the composition is skewed to basic residues.

This sequence belongs to the universal ribosomal protein uS12 family. Part of the 30S ribosomal subunit. Contacts proteins S8 and S17. May interact with IF1 in the 30S initiation complex.

Its function is as follows. With S4 and S5 plays an important role in translational accuracy. Functionally, interacts with and stabilizes bases of the 16S rRNA that are involved in tRNA selection in the A site and with the mRNA backbone. Located at the interface of the 30S and 50S subunits, it traverses the body of the 30S subunit contacting proteins on the other side and probably holding the rRNA structure together. The combined cluster of proteins S8, S12 and S17 appears to hold together the shoulder and platform of the 30S subunit. The polypeptide is Small ribosomal subunit protein uS12 (Rhodococcus jostii (strain RHA1)).